We begin with the raw amino-acid sequence, 918 residues long: Isoleucine--tRNA ligase 1 (918 aa).

The short motif at 57 to 67 is the 'HIGH' region element; that stretch reads PYANGDIHIGH. Residue E553 participates in L-isoleucyl-5'-AMP binding. Residues 594–598 carry the 'KMSKS' region motif; sequence KMSKS. K597 contributes to the ATP binding site. Residues C885, C888, C905, and C908 each contribute to the Zn(2+) site.

Belongs to the class-I aminoacyl-tRNA synthetase family. IleS type 1 subfamily. Monomer. The cofactor is Zn(2+).

The protein localises to the cytoplasm. It carries out the reaction tRNA(Ile) + L-isoleucine + ATP = L-isoleucyl-tRNA(Ile) + AMP + diphosphate. Catalyzes the attachment of isoleucine to tRNA(Ile). As IleRS can inadvertently accommodate and process structurally similar amino acids such as valine, to avoid such errors it has two additional distinct tRNA(Ile)-dependent editing activities. One activity is designated as 'pretransfer' editing and involves the hydrolysis of activated Val-AMP. The other activity is designated 'posttransfer' editing and involves deacylation of mischarged Val-tRNA(Ile). This is Isoleucine--tRNA ligase 1 from Oceanobacillus iheyensis (strain DSM 14371 / CIP 107618 / JCM 11309 / KCTC 3954 / HTE831).